The chain runs to 302 residues: Citrate lyase subunit beta (302 aa).

Substrate-binding residues include R69 and E132. 2 residues coordinate Mg(2+): E132 and D159.

The protein belongs to the HpcH/HpaI aldolase family. Citrate lyase beta subunit subfamily. As to quaternary structure, oligomer with a subunit composition of (alpha,beta,gamma)6. Mg(2+) is required as a cofactor.

Its subcellular location is the cytoplasm. The catalysed reaction is citrate = oxaloacetate + acetate. It catalyses the reaction (3S)-citryl-CoA = oxaloacetate + acetyl-CoA. In terms of biological role, represents a citryl-ACP lyase. The chain is Citrate lyase subunit beta (citE) from Leuconostoc mesenteroides subsp. cremoris.